We begin with the raw amino-acid sequence, 85 residues long: Large ribosomal subunit protein bL27 (85 aa).

A disordered region spans residues 1–20; the sequence is MAHKKAGGSTRNGRDSEAKR.

This sequence belongs to the bacterial ribosomal protein bL27 family.

This is Large ribosomal subunit protein bL27 from Klebsiella pneumoniae (strain 342).